A 228-amino-acid chain; its full sequence is Putative NAC domain-containing protein 61 (228 aa).

Residues 5 to 156 form the NAC domain; sequence LSVGFRFYPT…KSGSSRAFDR (152 aa). Disordered regions lie at residues 77–96 and 166–197; these read ARGG…ATGS and RNLP…QVDL. Low complexity predominate over residues 80-89; the sequence is GRPSRTTGSG. A compositionally biased stretch (polar residues) spans 168–193; sequence LPSNGVETSSRATISTSPETSHSGGN.

The protein resides in the nucleus. This Arabidopsis thaliana (Mouse-ear cress) protein is Putative NAC domain-containing protein 61 (NAC061).